Consider the following 270-residue polypeptide: Phosphonoacetaldehyde hydrolase (270 aa).

The active-site Nucleophile is the Asp-11. Positions 11 and 13 each coordinate Mg(2+). Residue Lys-53 is the Schiff-base intermediate with substrate of the active site. Residue Asp-187 coordinates Mg(2+).

The protein belongs to the HAD-like hydrolase superfamily. PhnX family. As to quaternary structure, homodimer. Mg(2+) is required as a cofactor.

It carries out the reaction phosphonoacetaldehyde + H2O = acetaldehyde + phosphate + H(+). In terms of biological role, involved in phosphonate degradation. This is Phosphonoacetaldehyde hydrolase from Salmonella paratyphi C (strain RKS4594).